The primary structure comprises 407 residues: tRNA N6-adenosine threonylcarbamoyltransferase, mitochondrial (407 aa).

A mitochondrion-targeting transit peptide spans 1 to 30 (MISIKGTGRFLLDNYRIWQRRAFNRPIQLR). 2 residues coordinate a divalent metal cation: His-145 and His-149. Residues 170–174 (LVSGG), Asp-203, Ala-217, Glu-221, 328–329 (SN), and Ser-360 each bind substrate. Residue Asp-361 participates in a divalent metal cation binding.

This sequence belongs to the KAE1 / TsaD family. Homodimer. A divalent metal cation is required as a cofactor.

The protein localises to the mitochondrion. It catalyses the reaction L-threonylcarbamoyladenylate + adenosine(37) in tRNA = N(6)-L-threonylcarbamoyladenosine(37) in tRNA + AMP + H(+). Functionally, required for the formation of a threonylcarbamoyl group on adenosine at position 37 (t(6)A37) in mitochondrial tRNAs that read codons beginning with adenine. Probably involved in the transfer of the threonylcarbamoyl moiety of threonylcarbamoyl-AMP (TC-AMP) to the N6 group of A37. Involved in mitochondrial genome maintenance. This is tRNA N6-adenosine threonylcarbamoyltransferase, mitochondrial (QRI7) from Saccharomyces cerevisiae (strain ATCC 204508 / S288c) (Baker's yeast).